Consider the following 312-residue polypeptide: R2-like ligand binding oxidase (312 aa).

E68, E101, and H104 together coordinate Mn(2+). A cross-link (3-(O4'-tyrosyl)-valine (Val-Tyr)) is located at residues 71–162 (VTQDIQPFMA…AAQVRASVTY (92 aa)). E101 is a Fe cation binding site. Fe cation-binding residues include E167, E202, and H205.

The protein belongs to the ribonucleoside diphosphate reductase small chain family. R2-like ligand binding oxidase subfamily. As to quaternary structure, homodimer. Fe cation serves as cofactor. Mn(2+) is required as a cofactor.

Its function is as follows. Probable oxidase that might be involved in lipid metabolism. The sequence is that of R2-like ligand binding oxidase from Mycolicibacterium vanbaalenii (strain DSM 7251 / JCM 13017 / BCRC 16820 / KCTC 9966 / NRRL B-24157 / PYR-1) (Mycobacterium vanbaalenii).